The following is a 308-amino-acid chain: Aspartate carbamoyltransferase catalytic subunit (308 aa).

2 residues coordinate carbamoyl phosphate: Arg57 and Thr58. Lys86 contacts L-aspartate. Residues Arg107, His135, and Gln138 each contribute to the carbamoyl phosphate site. Residues Arg168 and Arg228 each contribute to the L-aspartate site. Residues Leu267 and Pro268 each contribute to the carbamoyl phosphate site.

This sequence belongs to the aspartate/ornithine carbamoyltransferase superfamily. ATCase family. Heterododecamer (2C3:3R2) of six catalytic PyrB chains organized as two trimers (C3), and six regulatory PyrI chains organized as three dimers (R2).

It catalyses the reaction carbamoyl phosphate + L-aspartate = N-carbamoyl-L-aspartate + phosphate + H(+). Its pathway is pyrimidine metabolism; UMP biosynthesis via de novo pathway; (S)-dihydroorotate from bicarbonate: step 2/3. Functionally, catalyzes the condensation of carbamoyl phosphate and aspartate to form carbamoyl aspartate and inorganic phosphate, the committed step in the de novo pyrimidine nucleotide biosynthesis pathway. This Leptospira borgpetersenii serovar Hardjo-bovis (strain JB197) protein is Aspartate carbamoyltransferase catalytic subunit.